The chain runs to 152 residues: Deoxyuridine 5'-triphosphate nucleotidohydrolase (152 aa).

Substrate-binding positions include 71 to 73 (RSG), N84, 88 to 90 (LID), and K98.

The protein belongs to the dUTPase family. It depends on Mg(2+) as a cofactor.

It catalyses the reaction dUTP + H2O = dUMP + diphosphate + H(+). Its pathway is pyrimidine metabolism; dUMP biosynthesis; dUMP from dCTP (dUTP route): step 2/2. Functionally, this enzyme is involved in nucleotide metabolism: it produces dUMP, the immediate precursor of thymidine nucleotides and it decreases the intracellular concentration of dUTP so that uracil cannot be incorporated into DNA. This Legionella pneumophila (strain Paris) protein is Deoxyuridine 5'-triphosphate nucleotidohydrolase.